A 192-amino-acid chain; its full sequence is UPF0149 protein YgfB (192 aa).

The protein belongs to the UPF0149 family.

The sequence is that of UPF0149 protein YgfB from Salmonella agona (strain SL483).